A 344-amino-acid chain; its full sequence is Phosphate acyltransferase (344 aa).

Belongs to the PlsX family. Homodimer. Probably interacts with PlsY.

The protein resides in the cytoplasm. The enzyme catalyses a fatty acyl-[ACP] + phosphate = an acyl phosphate + holo-[ACP]. The protein operates within lipid metabolism; phospholipid metabolism. Its function is as follows. Catalyzes the reversible formation of acyl-phosphate (acyl-PO(4)) from acyl-[acyl-carrier-protein] (acyl-ACP). This enzyme utilizes acyl-ACP as fatty acyl donor, but not acyl-CoA. This chain is Phosphate acyltransferase, found in Yersinia enterocolitica serotype O:8 / biotype 1B (strain NCTC 13174 / 8081).